Here is a 348-residue protein sequence, read N- to C-terminus: Protein RecA (348 aa).

64–71 (GPESSGKT) provides a ligand contact to ATP. Residues 324–335 (EYEIDGSNKEPL) show a composition bias toward basic and acidic residues. Residues 324–348 (EYEIDGSNKEPLAETEETLSLLDDE) are disordered. Positions 336 to 348 (AETEETLSLLDDE) are enriched in acidic residues.

It belongs to the RecA family.

Its subcellular location is the cytoplasm. Functionally, can catalyze the hydrolysis of ATP in the presence of single-stranded DNA, the ATP-dependent uptake of single-stranded DNA by duplex DNA, and the ATP-dependent hybridization of homologous single-stranded DNAs. It interacts with LexA causing its activation and leading to its autocatalytic cleavage. The sequence is that of Protein RecA from Listeria ivanovii.